The following is a 310-amino-acid chain: Protease HtpX homolog (310 aa).

2 consecutive transmembrane segments (helical) span residues 16–36 and 55–75; these read NAVL…VDVI and IFPT…VVCI. Residue His-166 coordinates Zn(2+). Glu-167 is an active-site residue. Position 170 (His-170) interacts with Zn(2+). 2 helical membrane-spanning segments follow: residues 182–202 and 214–234; these read VGIL…FFMG and MILL…QMYL. Glu-239 lines the Zn(2+) pocket.

The protein belongs to the peptidase M48B family. Zn(2+) serves as cofactor.

Its subcellular location is the cell inner membrane. In Helicobacter pylori (strain Shi470), this protein is Protease HtpX homolog.